The sequence spans 111 residues: uncharacterized protein (111 aa).

Residues L8–K111 form the HIT domain. A Histidine triad motif motif is present at residues H100–H104.

This is an uncharacterized protein from Mesomycoplasma hyorhinis (Mycoplasma hyorhinis).